A 387-amino-acid chain; its full sequence is 3-ketoacyl-CoA thiolase (387 aa).

Cys-91 functions as the Acyl-thioester intermediate in the catalytic mechanism. Catalysis depends on proton acceptor residues His-343 and Cys-373.

The protein belongs to the thiolase-like superfamily. Thiolase family. As to quaternary structure, heterotetramer of two alpha chains (FadB) and two beta chains (FadA).

It localises to the cytoplasm. It carries out the reaction an acyl-CoA + acetyl-CoA = a 3-oxoacyl-CoA + CoA. The protein operates within lipid metabolism; fatty acid beta-oxidation. In terms of biological role, catalyzes the final step of fatty acid oxidation in which acetyl-CoA is released and the CoA ester of a fatty acid two carbons shorter is formed. In Escherichia coli O6:K15:H31 (strain 536 / UPEC), this protein is 3-ketoacyl-CoA thiolase.